A 329-amino-acid polypeptide reads, in one-letter code: uncharacterized protein (329 aa).

Disordered regions lie at residues 16–41 (RCGY…SRIC) and 183–229 (LENK…KFEP). Residues 213–229 (SNDKANRGEKGEAKFEP) show a composition bias toward basic and acidic residues.

In terms of tissue distribution, expressed in testis and epididymis. Expressed at lower levels in ovary.

Functionally, dispensable for normal development and fertility. This is an uncharacterized protein from Mus musculus (Mouse).